The following is a 569-amino-acid chain: 4-hydroxy-7-methoxy-3-oxo-3,4-dihydro-2H-1,4-benzoxazin-2-yl glucoside beta-D-glucosidase 1b, chloroplastic (569 aa).

The N-terminal 50 residues, Met1–Ala50, are a transit peptide targeting the chloroplast. Residues Gln92, His194, and Asn239–Glu240 contribute to the a beta-D-glucoside site. Glu240 (proton donor) is an active-site residue. A disulfide bond links Cys259 and Cys265. Residues Tyr383, Glu456, Trp504, Glu511–Trp512, and Phe520 contribute to the a beta-D-glucoside site. Glu456 serves as the catalytic Nucleophile.

This sequence belongs to the glycosyl hydrolase 1 family. In terms of assembly, homo- and heterohexamers. Expressed in young seedlings early after germination.

Its subcellular location is the plastid. The protein resides in the chloroplast. The catalysed reaction is Hydrolysis of terminal, non-reducing beta-D-glucosyl residues with release of beta-D-glucose.. The enzyme catalyses DIMBOA beta-D-glucoside + H2O = DIMBOA + D-glucose. It carries out the reaction DIBOA beta-D-glucoside + H2O = DIBOA + D-glucose. Acts in defense of young plant parts against pests via the production of hydroxamic acids from hydroxamic acid glucosides. Enzymatic activity is highly correlated with plant growth. The preferred substrate is DIMBOA-beta-D-glucoside. The sequence is that of 4-hydroxy-7-methoxy-3-oxo-3,4-dihydro-2H-1,4-benzoxazin-2-yl glucoside beta-D-glucosidase 1b, chloroplastic (GLU1B) from Triticum aestivum (Wheat).